The chain runs to 465 residues: Glutamate--tRNA ligase (465 aa).

The 'HIGH' region signature appears at 11–21; it reads PSPTGFIHLGN. The segment covering 120 to 131 has biased composition (basic and acidic residues); the sequence is KPRYDGTWRPEP. The disordered stretch occupies residues 120–139; sequence KPRYDGTWRPEPGKVLPTPP. The 'KMSKS' region signature appears at 243-247; sequence KMSKR. K246 lines the ATP pocket.

It belongs to the class-I aminoacyl-tRNA synthetase family. Glutamate--tRNA ligase type 1 subfamily. As to quaternary structure, monomer.

It localises to the cytoplasm. It catalyses the reaction tRNA(Glu) + L-glutamate + ATP = L-glutamyl-tRNA(Glu) + AMP + diphosphate. In terms of biological role, catalyzes the attachment of glutamate to tRNA(Glu) in a two-step reaction: glutamate is first activated by ATP to form Glu-AMP and then transferred to the acceptor end of tRNA(Glu). The protein is Glutamate--tRNA ligase of Ralstonia nicotianae (strain ATCC BAA-1114 / GMI1000) (Ralstonia solanacearum).